The primary structure comprises 396 residues: Ribosomal RNA small subunit methyltransferase H (396 aa).

Residues 101-103, aspartate 120, tyrosine 147, aspartate 171, and glutamine 178 each bind S-adenosyl-L-methionine; that span reads GGH.

Belongs to the methyltransferase superfamily. RsmH family.

Its subcellular location is the cytoplasm. It catalyses the reaction cytidine(1402) in 16S rRNA + S-adenosyl-L-methionine = N(4)-methylcytidine(1402) in 16S rRNA + S-adenosyl-L-homocysteine + H(+). Specifically methylates the N4 position of cytidine in position 1402 (C1402) of 16S rRNA. This Mycobacterium bovis (strain ATCC BAA-935 / AF2122/97) protein is Ribosomal RNA small subunit methyltransferase H.